The sequence spans 298 residues: UDP-N-acetylenolpyruvoylglucosamine reductase (298 aa).

Positions 27 to 206 (VGGPAQRLYR…QQQIRRLLRQ (180 aa)) constitute an FAD-binding PCMH-type domain. Arginine 171 is a catalytic residue. Serine 220 acts as the Proton donor in catalysis. The active site involves glutamate 290.

Belongs to the MurB family. FAD is required as a cofactor.

It localises to the cytoplasm. It carries out the reaction UDP-N-acetyl-alpha-D-muramate + NADP(+) = UDP-N-acetyl-3-O-(1-carboxyvinyl)-alpha-D-glucosamine + NADPH + H(+). The protein operates within cell wall biogenesis; peptidoglycan biosynthesis. Functionally, cell wall formation. The protein is UDP-N-acetylenolpyruvoylglucosamine reductase of Nitrosococcus oceani (strain ATCC 19707 / BCRC 17464 / JCM 30415 / NCIMB 11848 / C-107).